We begin with the raw amino-acid sequence, 158 residues long: Transcription antitermination protein NusB (158 aa).

The span at 1–12 (MKRVEKRAEKQG) shows a compositional bias: basic and acidic residues. Positions 1–20 (MKRVEKRAEKQGRGTARKSR) are disordered.

The protein belongs to the NusB family.

Its function is as follows. Involved in transcription antitermination. Required for transcription of ribosomal RNA (rRNA) genes. Binds specifically to the boxA antiterminator sequence of the ribosomal RNA (rrn) operons. The protein is Transcription antitermination protein NusB of Nitrosospira multiformis (strain ATCC 25196 / NCIMB 11849 / C 71).